The chain runs to 292 residues: Pantothenate synthetase (292 aa).

ATP is bound at residue 32 to 39; it reads MGFLHEGH. Catalysis depends on His-39, which acts as the Proton donor. Gln-63 is a (R)-pantoate binding site. Residue Gln-63 participates in beta-alanine binding. 150–153 lines the ATP pocket; that stretch reads GEKD. A (R)-pantoate-binding site is contributed by Gln-156. ATP-binding positions include Val-179 and 187–190; that span reads MSSR.

This sequence belongs to the pantothenate synthetase family. In terms of assembly, homodimer.

It localises to the cytoplasm. It catalyses the reaction (R)-pantoate + beta-alanine + ATP = (R)-pantothenate + AMP + diphosphate + H(+). It participates in cofactor biosynthesis; (R)-pantothenate biosynthesis; (R)-pantothenate from (R)-pantoate and beta-alanine: step 1/1. Catalyzes the condensation of pantoate with beta-alanine in an ATP-dependent reaction via a pantoyl-adenylate intermediate. The polypeptide is Pantothenate synthetase (Myxococcus xanthus (strain DK1622)).